The sequence spans 128 residues: Ribosome-binding factor A (128 aa).

This sequence belongs to the RbfA family. As to quaternary structure, monomer. Binds 30S ribosomal subunits, but not 50S ribosomal subunits or 70S ribosomes.

It is found in the cytoplasm. In terms of biological role, one of several proteins that assist in the late maturation steps of the functional core of the 30S ribosomal subunit. Associates with free 30S ribosomal subunits (but not with 30S subunits that are part of 70S ribosomes or polysomes). Required for efficient processing of 16S rRNA. May interact with the 5'-terminal helix region of 16S rRNA. This Haemophilus influenzae (strain ATCC 51907 / DSM 11121 / KW20 / Rd) protein is Ribosome-binding factor A.